Here is a 308-residue protein sequence, read N- to C-terminus: Nodulation protein D 1 (308 aa).

The 58-residue stretch at 6–63 folds into the HTH lysR-type domain; it reads LDLNLLVALDALMTERNLTAAARSINLSQPAMSAAVGRLRVYFEDELFTMNGRELVLT. Positions 23 to 42 form a DNA-binding region, H-T-H motif; the sequence is LTAAARSINLSQPAMSAAVG.

Belongs to the LysR transcriptional regulatory family.

Functionally, nodD regulates the expression of the nodABCFE genes which encode other nodulation proteins. NodD is also a negative regulator of its own expression. Binds flavonoids as inducers. This Rhizobium tropici protein is Nodulation protein D 1 (nodD1).